Reading from the N-terminus, the 222-residue chain is Pyrrolidone-carboxylate peptidase (222 aa).

Residues Glu80, Cys146, and His170 contribute to the active site.

This sequence belongs to the peptidase C15 family. As to quaternary structure, homotetramer.

Its subcellular location is the cytoplasm. It catalyses the reaction Release of an N-terminal pyroglutamyl group from a polypeptide, the second amino acid generally not being Pro.. Removes 5-oxoproline from various penultimate amino acid residues except L-proline. The protein is Pyrrolidone-carboxylate peptidase of Mycobacterium marinum (strain ATCC BAA-535 / M).